The chain runs to 110 residues: MEAKAVARFVRMSPRKVRLVADEIRGYAVGEALDILKFTNKRAIEPLTKVILSASANASVLNDKVDSNQLFIKKIYVDEGPIMKRFRPRARGRAARIRKRLSHITVVLSD.

The protein belongs to the universal ribosomal protein uL22 family. As to quaternary structure, part of the 50S ribosomal subunit.

This protein binds specifically to 23S rRNA; its binding is stimulated by other ribosomal proteins, e.g. L4, L17, and L20. It is important during the early stages of 50S assembly. It makes multiple contacts with different domains of the 23S rRNA in the assembled 50S subunit and ribosome. Its function is as follows. The globular domain of the protein is located near the polypeptide exit tunnel on the outside of the subunit, while an extended beta-hairpin is found that lines the wall of the exit tunnel in the center of the 70S ribosome. This chain is Large ribosomal subunit protein uL22, found in Leptospira borgpetersenii serovar Hardjo-bovis (strain JB197).